A 577-amino-acid chain; its full sequence is E3 ubiquitin-protein ligase MSL2 (577 aa).

Positions 1–116 (MNPVNATALY…CEYITQTTLA (116 aa)) are sufficient for interaction with MSL1. 8 residues coordinate Zn(2+): cysteine 44, cysteine 47, cysteine 62, histidine 64, cysteine 67, cysteine 70, cysteine 81, and cysteine 84. The RING-type zinc finger occupies 44–85 (CCVCGHLLQDPIAPTNSTCQHYVCKTCKGKKMMMKPSCSWCK). Lysine 375 participates in a covalent cross-link: Glycyl lysine isopeptide (Lys-Gly) (interchain with G-Cter in SUMO2). Residues 405–428 (TKSMKKSHEHGSKKSHSKSKPGIL) form a disordered region. A compositionally biased stretch (basic residues) spans 407 to 423 (SMKKSHEHGSKKSHSKS). At serine 447 the chain carries Phosphoserine. The region spanning 457-508 (QEKKGCKCGRATQNPSVLTCRGQRCPCYSNRKACLDCICRGCQNSYMANGEK) is the CXC MSL2-type domain. Zn(2+)-binding residues include cysteine 462, cysteine 464, cysteine 476, cysteine 481, cysteine 483, cysteine 490, cysteine 493, cysteine 495, and cysteine 498.

The protein belongs to the MSL2 family. As to quaternary structure, component of a multisubunit histone acetyltransferase complex (MSL) at least composed of the KAT8/MOF/MYST1, MSL1/hampin, MSL2 and MSL3. Forms a MSL heterotetrameric core with MSL1.

The protein localises to the nucleus. The protein resides in the chromosome. The catalysed reaction is S-ubiquitinyl-[E2 ubiquitin-conjugating enzyme]-L-cysteine + [acceptor protein]-L-lysine = [E2 ubiquitin-conjugating enzyme]-L-cysteine + N(6)-ubiquitinyl-[acceptor protein]-L-lysine.. It participates in protein modification; protein ubiquitination. Functionally, non-catalytic component of the MSL histone acetyltransferase complex, a multiprotein complex that mediates the majority of histone H4 acetylation at 'Lys-16' (H4K16ac), an epigenetic mark that prevents chromatin compaction. The MSL complex is required for chromosome stability and genome integrity by maintaining homeostatic levels of H4K16ac. The MSL complex is also involved in gene dosage by promoting up-regulation of genes expressed by the X chromosome. X up-regulation is required to compensate for autosomal biallelic expression. The MSL complex also participates in gene dosage compensation by promoting expression of Tsix non-coding RNA. MSL2 plays a key role in gene dosage by ensuring biallelic expression of a subset of dosage-sensitive genes, including many haploinsufficient genes. Acts by promoting promoter-enhancer contacts, thereby preventing DNA methylation of one allele and creating a methylation-free environment for methylation-sensitive transcription factors such as SP1, KANSL1 and KANSL3. Also acts as an E3 ubiquitin ligase that promotes monoubiquitination of histone H2B at 'Lys-35' (H2BK34Ub), but not that of H2A. This activity is greatly enhanced by heterodimerization with MSL1. H2B ubiquitination in turn stimulates histone H3 methylation at 'Lys-4' (H3K4me) and 'Lys-79' (H3K79me) and leads to gene activation, including that of HOXA9 and MEIS1. The sequence is that of E3 ubiquitin-protein ligase MSL2 from Mus musculus (Mouse).